A 736-amino-acid chain; its full sequence is ABC transporter G family member 16 (736 aa).

Residues L88 to E332 enclose the ABC transporter domain. An ATP-binding site is contributed by G125–S132. Helical transmembrane passes span S410 to I430, L449 to W469, F484 to L504, V525 to V545, A569 to M589, L590 to I610, and L709 to L729. The region spanning I430–F640 is the ABC transmembrane type-2 domain.

It belongs to the ABC transporter superfamily. ABCG family. Eye pigment precursor importer (TC 3.A.1.204) subfamily.

The protein resides in the membrane. The chain is ABC transporter G family member 16 (ABCG16) from Arabidopsis thaliana (Mouse-ear cress).